Here is a 201-residue protein sequence, read N- to C-terminus: Small ribosomal subunit protein uS4c (201 aa).

The segment at 15 to 44 (LGALPGLTSKRPKTGNDLKNQSRSGKKSQY) is disordered. Positions 89–150 (MRLDNILFRL…EKKSRTLIQN (62 aa)) constitute an S4 RNA-binding domain.

The protein belongs to the universal ribosomal protein uS4 family. In terms of assembly, part of the 30S ribosomal subunit. Contacts protein S5. The interaction surface between S4 and S5 is involved in control of translational fidelity.

Its subcellular location is the plastid. It localises to the chloroplast. Its function is as follows. One of the primary rRNA binding proteins, it binds directly to 16S rRNA where it nucleates assembly of the body of the 30S subunit. Functionally, with S5 and S12 plays an important role in translational accuracy. The chain is Small ribosomal subunit protein uS4c (rps4) from Cucumis sativus (Cucumber).